The following is a 207-amino-acid chain: Immunity protein SdpI (207 aa).

6 consecutive transmembrane segments (helical) span residues 5-25, 47-67, 78-98, 100-120, 150-170, and 171-191; these read IISIIIVCLSFLTSIILYQYL, TIFIIPVVMLIYYLTFYMLTI, FLASNNMLILLYILQLSTLLI, LGYEVNIDLIIGLGVGIFLII, LGNRFASKVLVVCGFIIAVLS, and FFTGEYIILIMIVLVLLALVI.

It is found in the membrane. Its function is as follows. Immunity protein that provides protection for the cell against the toxic effects of SDP, its own SdpC-derived killing factor, and that functions as a receptor/signal transduction protein as well. Once SDP accumulates in the extracellular milieu, SdpI binds to SDP, causing sequestration of SdpR at the bacterial membrane. The polypeptide is Immunity protein SdpI (sdpI) (Bacillus subtilis (strain 168)).